A 560-amino-acid chain; its full sequence is DNA ligase B (560 aa).

Residue K124 is the N6-AMP-lysine intermediate of the active site.

The protein belongs to the NAD-dependent DNA ligase family. LigB subfamily.

The enzyme catalyses NAD(+) + (deoxyribonucleotide)n-3'-hydroxyl + 5'-phospho-(deoxyribonucleotide)m = (deoxyribonucleotide)n+m + AMP + beta-nicotinamide D-nucleotide.. Catalyzes the formation of phosphodiester linkages between 5'-phosphoryl and 3'-hydroxyl groups in double-stranded DNA using NAD as a coenzyme and as the energy source for the reaction. The sequence is that of DNA ligase B from Escherichia coli O1:K1 / APEC.